A 339-amino-acid chain; its full sequence is Protein RETICULATA-RELATED 2, chloroplastic (339 aa).

The N-terminal 58 residues, 1-58 (MAAMAAKLHISTKSDQSNVRLPRLINLSRDPTARVLFPRNGSVSSLHTNFSSPNIMVP), are a transit peptide targeting the chloroplast. The segment covering 68 to 86 (IGNHGGGSGSGGGGGGYGG) has biased composition (gly residues). The segment at 68–92 (IGNHGGGSGSGGGGGGYGGSEEEES) is disordered. 2 consecutive transmembrane segments (helical) span residues 148–168 (FVFS…YLLA) and 213–233 (VFAT…NGLI).

This sequence belongs to the RETICULATA family.

The protein localises to the plastid. It is found in the chloroplast membrane. May play a role in leaf development. The chain is Protein RETICULATA-RELATED 2, chloroplastic from Arabidopsis thaliana (Mouse-ear cress).